The following is a 353-amino-acid chain: Phospho-N-acetylmuramoyl-pentapeptide-transferase (353 aa).

A run of 10 helical transmembrane segments spans residues 24-44, 66-86, 88-108, 129-149, 160-180, 192-212, 229-249, 256-276, 281-301, and 330-350; these read LGFF…ILWA, TPTM…VLCA, LGNL…FVGF, FGML…KGLD, PLFE…FLST, GLAS…VYVA, VGEL…FLWY, VFMG…NAIV, ILLV…ILQV, and KVIV…LLSL.

This sequence belongs to the glycosyltransferase 4 family. MraY subfamily. Mg(2+) serves as cofactor.

Its subcellular location is the cell inner membrane. The enzyme catalyses UDP-N-acetyl-alpha-D-muramoyl-L-alanyl-gamma-D-glutamyl-meso-2,6-diaminopimeloyl-D-alanyl-D-alanine + di-trans,octa-cis-undecaprenyl phosphate = di-trans,octa-cis-undecaprenyl diphospho-N-acetyl-alpha-D-muramoyl-L-alanyl-D-glutamyl-meso-2,6-diaminopimeloyl-D-alanyl-D-alanine + UMP. It functions in the pathway cell wall biogenesis; peptidoglycan biosynthesis. Its function is as follows. Catalyzes the initial step of the lipid cycle reactions in the biosynthesis of the cell wall peptidoglycan: transfers peptidoglycan precursor phospho-MurNAc-pentapeptide from UDP-MurNAc-pentapeptide onto the lipid carrier undecaprenyl phosphate, yielding undecaprenyl-pyrophosphoryl-MurNAc-pentapeptide, known as lipid I. This is Phospho-N-acetylmuramoyl-pentapeptide-transferase from Helicobacter pylori (strain HPAG1).